The following is a 228-amino-acid chain: Prophenin-2 (228 aa).

Positions 1–29 (METQRASLCLGRWSLWLLLLALVVPSASA) are cleaved as a signal peptide. Positions 30 to 146 (QALSYREAVL…FLRRPRLRRQ (117 aa)) are excised as a propeptide. Intrachain disulfides connect Cys85-Cys96 and Cys107-Cys124. 7 consecutive repeat copies span residues 148–157 (FPPPNVPGPR), 158–167 (FPPPNVPGPR), 168–177 (FPPPNFPGPR), 178–187 (FPPPNFPGPR), 188–197 (FPPPNFPGPP), 198–207 (FPPPIFPGPW), and 208–217 (FPPPPPFRPP). A 7 X 10 AA tandem repeats region spans residues 148-217 (FPPPNVPGPR…FPPPPPFRPP (70 aa)). Disordered regions lie at residues 167–195 (RFPP…NFPG) and 207–228 (WFPP…PGRR). Residue Pro225 is modified to Proline amide. A propeptide spans 226 to 228 (GRR) (removed in mature form).

Belongs to the cathelicidin family.

It localises to the secreted. Its function is as follows. Exerts antimicrobial activity. It is more effective against Gram-negative bacteria than Gram-positive bacteria. The polypeptide is Prophenin-2 (Sus scrofa (Pig)).